A 425-amino-acid chain; its full sequence is Serine--tRNA ligase (425 aa).

228-230 (TAE) contacts L-serine. 259-261 (RSE) provides a ligand contact to ATP. Glu-282 contributes to the L-serine binding site. 346–349 (EIAS) contacts ATP. Ser-382 serves as a coordination point for L-serine.

It belongs to the class-II aminoacyl-tRNA synthetase family. Type-1 seryl-tRNA synthetase subfamily. In terms of assembly, homodimer. The tRNA molecule binds across the dimer.

The protein resides in the cytoplasm. The catalysed reaction is tRNA(Ser) + L-serine + ATP = L-seryl-tRNA(Ser) + AMP + diphosphate + H(+). It catalyses the reaction tRNA(Sec) + L-serine + ATP = L-seryl-tRNA(Sec) + AMP + diphosphate + H(+). The protein operates within aminoacyl-tRNA biosynthesis; selenocysteinyl-tRNA(Sec) biosynthesis; L-seryl-tRNA(Sec) from L-serine and tRNA(Sec): step 1/1. Catalyzes the attachment of serine to tRNA(Ser). Is also able to aminoacylate tRNA(Sec) with serine, to form the misacylated tRNA L-seryl-tRNA(Sec), which will be further converted into selenocysteinyl-tRNA(Sec). This Rickettsia prowazekii (strain Madrid E) protein is Serine--tRNA ligase.